The primary structure comprises 95 residues: Protein S100-A10 (95 aa).

An N6-acetyllysine mark is found at Lys23, Lys28, Lys54, and Lys57. The 36-residue stretch at 47 to 82 (KDPLAVDKIMKDLDQCRDGKVGFQSFLSLVAGLIIA) folds into the EF-hand domain. The interval 60-71 (DQCRDGKVGFQS) is ancestral calcium site.

Belongs to the S-100 family. In terms of assembly, heterotetramer containing 2 light chains of S100A10/p11 and 2 heavy chains of ANXA2/p36. Interacts with SCN10A. Interacts with TASOR.

Because S100A10 induces the dimerization of ANXA2/p36, it may function as a regulator of protein phosphorylation in that the ANXA2 monomer is the preferred target (in vitro) of tyrosine-specific kinase. This is Protein S100-A10 (S100a10) from Rattus norvegicus (Rat).